The primary structure comprises 1149 residues: DNA polymerase (1149 aa).

Residues 1–28 (MSLVQSHGTSGLFTEPPNSINQQESSGP) show a composition bias toward polar residues. The tract at residues 1–49 (MSLVQSHGTSGLFTEPPNSINQQESSGPSLPAQDATQASASSARAGATP) is disordered. Low complexity predominate over residues 31–49 (PAQDATQASASSARAGATP).

It belongs to the DNA polymerase type-B family. Heterodimer with the terminal protein; this heterodimer binds to bp 9 to 18 of the genome. Forms a complex with viral pTP, DBP and hosts NFIA and POU2F1/OCT1 for initiation of replication.

The protein localises to the host nucleus. It catalyses the reaction DNA(n) + a 2'-deoxyribonucleoside 5'-triphosphate = DNA(n+1) + diphosphate. Its function is as follows. Eukaryotic-type DNA polymerase involved in viral genomic replication. DNA synthesis is protein primed, and acts in a strand displacement replication. Assembles in complex with viral pTP, DBP, host NFIA and host POU2F1/OCT1 on viral origin of replication. The polymerase covalently transfers dCMP onto pTP, thereby initiating complementary strand synthesis. This Canine adenovirus serotype 1 (strain CLL) (CAdV-1) protein is DNA polymerase.